Reading from the N-terminus, the 693-residue chain is Elongation factor G (693 aa).

In terms of domain architecture, tr-type G spans 8–282 (EKTRNIGIMA…AVVDYLPSPL (275 aa)). GTP-binding positions include 17-24 (AHVDAGKT), 81-85 (DTPGH), and 135-138 (NKMD).

Belongs to the TRAFAC class translation factor GTPase superfamily. Classic translation factor GTPase family. EF-G/EF-2 subfamily.

The protein localises to the cytoplasm. In terms of biological role, catalyzes the GTP-dependent ribosomal translocation step during translation elongation. During this step, the ribosome changes from the pre-translocational (PRE) to the post-translocational (POST) state as the newly formed A-site-bound peptidyl-tRNA and P-site-bound deacylated tRNA move to the P and E sites, respectively. Catalyzes the coordinated movement of the two tRNA molecules, the mRNA and conformational changes in the ribosome. This Streptococcus mutans serotype c (strain ATCC 700610 / UA159) protein is Elongation factor G.